The chain runs to 444 residues: Methylenetetrahydrofolate--tRNA-(uracil-5-)-methyltransferase TrmFO (444 aa).

An FAD-binding site is contributed by 11 to 16; the sequence is GGGLAG.

It belongs to the MnmG family. TrmFO subfamily. FAD serves as cofactor.

It is found in the cytoplasm. It carries out the reaction uridine(54) in tRNA + (6R)-5,10-methylene-5,6,7,8-tetrahydrofolate + NADH + H(+) = 5-methyluridine(54) in tRNA + (6S)-5,6,7,8-tetrahydrofolate + NAD(+). It catalyses the reaction uridine(54) in tRNA + (6R)-5,10-methylene-5,6,7,8-tetrahydrofolate + NADPH + H(+) = 5-methyluridine(54) in tRNA + (6S)-5,6,7,8-tetrahydrofolate + NADP(+). Catalyzes the folate-dependent formation of 5-methyl-uridine at position 54 (M-5-U54) in all tRNAs. This chain is Methylenetetrahydrofolate--tRNA-(uracil-5-)-methyltransferase TrmFO, found in Desulfotalea psychrophila (strain LSv54 / DSM 12343).